Consider the following 372-residue polypeptide: Cyclin-A3-2 (372 aa).

The segment at 53 to 73 (NQKKETQKPKRNLKPPPAKQI) is disordered.

Belongs to the cyclin family. Cyclin AB subfamily.

The chain is Cyclin-A3-2 (CYCA3-2) from Arabidopsis thaliana (Mouse-ear cress).